Reading from the N-terminus, the 335-residue chain is Ketol-acid reductoisomerase (NAD(P)(+)) (335 aa).

The KARI N-terminal Rossmann domain maps to 2–182; sequence AKIYKDEDIS…GCARAGVIES (181 aa). Residues 25 to 28, R49, S53, and 83 to 86 each bind NADP(+); these read YGSQ and DMVQ. The active site involves H108. G134 contacts NADP(+). Residues 183-328 form the KARI C-terminal knotted domain; it reads TFKEETETDL…RKLREMMFRG (146 aa). Residues D191, E195, E227, and E231 each contribute to the Mg(2+) site. Residue S252 coordinates substrate.

This sequence belongs to the ketol-acid reductoisomerase family. In terms of assembly, homodimer. Mg(2+) serves as cofactor.

It catalyses the reaction (2R)-2,3-dihydroxy-3-methylbutanoate + NAD(+) = (2S)-2-acetolactate + NADH + H(+). The catalysed reaction is (2R)-2,3-dihydroxy-3-methylbutanoate + NADP(+) = (2S)-2-acetolactate + NADPH + H(+). Its pathway is amino-acid biosynthesis; L-isoleucine biosynthesis; L-isoleucine from 2-oxobutanoate: step 2/4. It participates in amino-acid biosynthesis; L-valine biosynthesis; L-valine from pyruvate: step 2/4. In terms of biological role, involved in the biosynthesis of branched-chain amino acids (BCAA). Catalyzes an alkyl-migration followed by a ketol-acid reduction of (S)-2-acetolactate (S2AL) to yield (R)-2,3-dihydroxy-isovalerate. In the isomerase reaction, S2AL is rearranged via a Mg-dependent methyl migration to produce 3-hydroxy-3-methyl-2-ketobutyrate (HMKB). In the reductase reaction, this 2-ketoacid undergoes a metal-dependent reduction by NADPH or NADH to yield (R)-2,3-dihydroxy-isovalerate. This is Ketol-acid reductoisomerase (NAD(P)(+)) from Ignisphaera aggregans (strain DSM 17230 / JCM 13409 / AQ1.S1).